Consider the following 378-residue polypeptide: Succinate--CoA ligase [GDP-forming] subunit beta (378 aa).

The ATP-grasp domain occupies 9–235 (KEILARYGVP…VEAEHPLEVE (227 aa)). GTP is bound by residues lysine 45, 52–54 (GRG), valine 94, and glutamate 99. The Mg(2+) site is built by asparagine 190 and aspartate 204. Substrate-binding positions include asparagine 255 and 312 to 314 (GIT).

This sequence belongs to the succinate/malate CoA ligase beta subunit family. Heterotetramer of two alpha and two beta subunits. Mg(2+) serves as cofactor.

The enzyme catalyses GTP + succinate + CoA = succinyl-CoA + GDP + phosphate. It catalyses the reaction succinate + ATP + CoA = succinyl-CoA + ADP + phosphate. Its pathway is carbohydrate metabolism; tricarboxylic acid cycle; succinate from succinyl-CoA (ligase route): step 1/1. Functionally, succinyl-CoA synthetase functions in the citric acid cycle (TCA), coupling the hydrolysis of succinyl-CoA to the synthesis of either ATP or GTP and thus represents the only step of substrate-level phosphorylation in the TCA. The beta subunit provides nucleotide specificity of the enzyme and binds the substrate succinate, while the binding sites for coenzyme A and phosphate are found in the alpha subunit. Can use either ATP or GTP, but prefers GTP. The chain is Succinate--CoA ligase [GDP-forming] subunit beta from Thermus thermophilus.